A 490-amino-acid chain; its full sequence is Argininosuccinate lyase (490 aa).

It belongs to the lyase 1 family. Argininosuccinate lyase subfamily.

Its subcellular location is the cytoplasm. The enzyme catalyses 2-(N(omega)-L-arginino)succinate = fumarate + L-arginine. It participates in amino-acid biosynthesis; L-arginine biosynthesis; L-arginine from L-ornithine and carbamoyl phosphate: step 3/3. This chain is Argininosuccinate lyase, found in Bifidobacterium longum subsp. infantis (strain ATCC 15697 / DSM 20088 / JCM 1222 / NCTC 11817 / S12).